Here is a 215-residue protein sequence, read N- to C-terminus: Na(+)-translocating NADH-quinone reductase subunit D (215 aa).

The next 6 helical transmembrane spans lie at 14–34 (PFIS…ALAV), 42–62 (FVMA…ISLI), 72–92 (IIVQ…LLKA), 103–123 (VFVG…AYAM), 131–151 (FLDG…VGTI), and 178–198 (NGML…IWVL).

Belongs to the NqrDE/RnfAE family. As to quaternary structure, composed of six subunits; NqrA, NqrB, NqrC, NqrD, NqrE and NqrF.

It localises to the cell inner membrane. The enzyme catalyses a ubiquinone + n Na(+)(in) + NADH + H(+) = a ubiquinol + n Na(+)(out) + NAD(+). In terms of biological role, NQR complex catalyzes the reduction of ubiquinone-1 to ubiquinol by two successive reactions, coupled with the transport of Na(+) ions from the cytoplasm to the periplasm. NqrA to NqrE are probably involved in the second step, the conversion of ubisemiquinone to ubiquinol. This is Na(+)-translocating NADH-quinone reductase subunit D from Tolumonas auensis (strain DSM 9187 / NBRC 110442 / TA 4).